Reading from the N-terminus, the 205-residue chain is Fibrillarin-like rRNA/tRNA 2'-O-methyltransferase (205 aa).

Residues Ser60–Thr61, Glu76–Phe77, Asp101–Ala102, and Asp121–Gln124 contribute to the S-adenosyl-L-methionine site.

This sequence belongs to the methyltransferase superfamily. Fibrillarin family. In terms of assembly, interacts with nop5. Component of box C/D small ribonucleoprotein (sRNP) particles that contain rpl7ae, FlpA and nop5, plus a guide RNA.

Functionally, involved in pre-rRNA and tRNA processing. Utilizes the methyl donor S-adenosyl-L-methionine to catalyze the site-specific 2'-hydroxyl methylation of ribose moieties in rRNA and tRNA. Site specificity is provided by a guide RNA that base pairs with the substrate. Methylation occurs at a characteristic distance from the sequence involved in base pairing with the guide RNA. The chain is Fibrillarin-like rRNA/tRNA 2'-O-methyltransferase from Methanospirillum hungatei JF-1 (strain ATCC 27890 / DSM 864 / NBRC 100397 / JF-1).